The chain runs to 318 residues: Ribosomal RNA small subunit methyltransferase H (318 aa).

S-adenosyl-L-methionine-binding positions include 38–40, aspartate 57, leucine 91, aspartate 105, and glutamine 112; that span reads AGH.

It belongs to the methyltransferase superfamily. RsmH family.

It is found in the cytoplasm. The catalysed reaction is cytidine(1402) in 16S rRNA + S-adenosyl-L-methionine = N(4)-methylcytidine(1402) in 16S rRNA + S-adenosyl-L-homocysteine + H(+). Functionally, specifically methylates the N4 position of cytidine in position 1402 (C1402) of 16S rRNA. This chain is Ribosomal RNA small subunit methyltransferase H, found in Clavibacter michiganensis subsp. michiganensis (strain NCPPB 382).